The following is a 341-amino-acid chain: tRNA N6-adenosine threonylcarbamoyltransferase (341 aa).

Fe cation-binding residues include histidine 111 and histidine 115. Residues 134–138 (LVSGG), aspartate 167, glycine 180, and asparagine 276 each bind substrate. Aspartate 304 contributes to the Fe cation binding site.

This sequence belongs to the KAE1 / TsaD family. Requires Fe(2+) as cofactor.

It localises to the cytoplasm. The enzyme catalyses L-threonylcarbamoyladenylate + adenosine(37) in tRNA = N(6)-L-threonylcarbamoyladenosine(37) in tRNA + AMP + H(+). Required for the formation of a threonylcarbamoyl group on adenosine at position 37 (t(6)A37) in tRNAs that read codons beginning with adenine. Is involved in the transfer of the threonylcarbamoyl moiety of threonylcarbamoyl-AMP (TC-AMP) to the N6 group of A37, together with TsaE and TsaB. TsaD likely plays a direct catalytic role in this reaction. This Pseudomonas fluorescens (strain ATCC BAA-477 / NRRL B-23932 / Pf-5) protein is tRNA N6-adenosine threonylcarbamoyltransferase.